A 193-amino-acid chain; its full sequence is Fra a 1-associated protein (193 aa).

Positions 1-27 are disordered; it reads MGWVWKDDDEQGGHVNPSAADISPRLD.

In terms of assembly, interacts with FRAA1E, FRAA2 and FRAA3.

This chain is Fra a 1-associated protein, found in Fragaria ananassa (Strawberry).